The sequence spans 690 residues: F-box/LRR-repeat protein 5 (690 aa).

The tract at residues 1–159 (MAPFPDEVDV…IKKKVIAQHC (159 aa)) is hemerythrin-like. Residues His-15, His-57, Glu-58, Glu-61, His-80, His-126, and Glu-130 each contribute to the Fe(3+) site. Residues 202 to 248 (STGITHLPPEVMLSIFSYLNPQELCRCSQVSTKWSQLAKTGSLWKHL) enclose the F-box domain. 7 LRR repeats span residues 340–364 (SSAVSSKMVRQILELCPNLEHLDLT), 365–392 (QTDISDSAFDSWSWLGCCQSLRHLDLSG), 393–418 (CEKITDMALEKISRALGVLTSHQSGF), 478–507 (VWMLDAEDLADIEDAVEWRHRNVESLCVME), 575–606 (TTLPRGKDLIYFGSEKSDQETGRVLLFLSLSG), 607–634 (CYQITDHGLRALTLGGGLPYLEHLNLSG), and 635–660 (CLTVTGAGLQDLVSACPSLNDEYFYY). [2Fe-2S] cluster is bound by residues Cys-661, Cys-675, Cys-685, and Cys-686.

Part of a SCF (SKP1-cullin-F-box) protein ligase complex. Interacts with ACO1/IRP1, IREB2/IRP2; the interaction depends on the [2Fe-2S] cluster. Interacts with DCTN1/p150-glued. [2Fe-2S] cluster is required as a cofactor. In terms of processing, polybiquitinated upon iron and oxygen depletion, leading to its degradation by the proteasome. Ubiquitination is regulated by the hemerythrin-like region that acts as an oxygen and iron sensor. Undergoes constitutive ubiquitin-dependent degradation at the steady state by HERC2. In terms of tissue distribution, ubiquitously expressed. Highly expressed in early embryogenesis with expression decreasing as the embryo progresses through development (E11 and E15).

Its subcellular location is the cytoplasm. It is found in the perinuclear region. It localises to the nucleus. Its pathway is protein modification; protein ubiquitination. An iron-sulfur cluster promotes IRP2 polyubiquitination and degradation in response to both iron and oxygen concentrations. Component of some SCF (SKP1-cullin-F-box) protein ligase complex that plays a central role in iron homeostasis by promoting the ubiquitination and subsequent degradation of IREB2/IRP2. The C-terminal domain of FBXL5 contains a redox-sensitive [2Fe-2S] cluster that, upon oxidation, promotes binding to IRP2 to effect its oxygen-dependent degradation. Under iron deficiency conditions, the N-terminal hemerythrin-like (Hr) region, which contains a diiron metal center, cannot bind iron and undergoes conformational changes that destabilize the FBXL5 protein and cause its ubiquitination and degradation. When intracellular iron levels start rising, the Hr region is stabilized. Additional increases in iron levels facilitate the assembly and incorporation of a redox active [2Fe-2S] cluster in the C-terminal domain. Only when oxygen level is high enough to maintain the cluster in its oxidized state can FBXL5 recruit IRP2 as a substrate for polyubiquination and degradation. Promotes ubiquitination and subsequent degradation of the dynactin complex component DCTN1. Within the nucleus, promotes the ubiquitination of SNAI1; preventing its interaction with DNA and promoting its degradation. Negatively regulates DNA damage response by mediating the ubiquitin-proteasome degradation of the DNA repair protein NABP2. In Mus musculus (Mouse), this protein is F-box/LRR-repeat protein 5 (Fbxl5).